The primary structure comprises 249 residues: 2,3-bisphosphoglycerate-dependent phosphoglycerate mutase (249 aa).

Substrate-binding positions include 7-14 (RHGESEWN), 20-21 (TG), Arg59, 86-89 (ERHY), Lys97, 113-114 (RR), and 182-183 (GN). His8 acts as the Tele-phosphohistidine intermediate in catalysis. Glu86 acts as the Proton donor/acceptor in catalysis.

Belongs to the phosphoglycerate mutase family. BPG-dependent PGAM subfamily.

The enzyme catalyses (2R)-2-phosphoglycerate = (2R)-3-phosphoglycerate. It participates in carbohydrate degradation; glycolysis; pyruvate from D-glyceraldehyde 3-phosphate: step 3/5. Catalyzes the interconversion of 2-phosphoglycerate and 3-phosphoglycerate. The polypeptide is 2,3-bisphosphoglycerate-dependent phosphoglycerate mutase (Lachnoclostridium phytofermentans (strain ATCC 700394 / DSM 18823 / ISDg) (Clostridium phytofermentans)).